The chain runs to 839 residues: Amyloid-beta A4 precursor protein-binding family A member 1 (839 aa).

3 disordered regions span residues 1 to 118 (MNHL…DESA), 235 to 346 (RLHH…EKRD), and 362 to 437 (VKTR…ESRK). Residues 23–38 (ESVEADLEHPEVEEEQ) show a composition bias toward acidic residues. Serine 79 carries the post-translational modification Phosphoserine. Composition is skewed to basic and acidic residues over residues 103–112 (DGYEAERAQD) and 237–255 (HHYD…KEAE). A munc-18-1 binding region spans residues 227-315 (YRQEALGARL…TPGGGHPDSP (89 aa)). Serine 243, serine 247, serine 249, serine 264, serine 281, and serine 286 each carry phosphoserine. Threonine 306 carries the post-translational modification Phosphothreonine. Phosphoserine is present on residues serine 314 and serine 369. Threonine 372 bears the Phosphothreonine mark. The segment at 375–438 (EPKEPIWVMR…ASTNKESRKS (64 aa)) is LIN-2/CASK binding. The segment covering 389-400 (PTRDCDDQRPVD) has biased composition (basic and acidic residues). Residues 401–417 (GDSPSPGSSSPLGAESS) are compositionally biased toward low complexity. Residues serine 403, serine 405, serine 410, and serine 570 each carry the phosphoserine modification. The region spanning 459–645 (DGIIFAANYL…LLNTQDMYND (187 aa)) is the PID domain. An autoinhibitory helix linker region spans residues 628–643 (LSQKEYSDLLNTQDMY). PDZ domains lie at 658–744 (DVFI…IVRC) and 749–824 (TVLI…TMPA).

As to quaternary structure, part of a multimeric complex containing STXBP1 and STX1A. Interacts with STXBP1. Component of the brain-specific heterotrimeric complex (LIN-10-LIN-2-LIN-7 complex) composed of at least APBA1, CASK, and LIN7, which associates with the motor protein KIF17 to transport vesicles along microtubules. Within the complex, interacts (via PDZ domain) with the motor protein KIF17; the interaction is direct and is required for association of KIF17 with the cargo that is to be transported. Binds to the cytoplasmic domain of amyloid protein (APP). Interacts (via PDZ 1 and 2 domains) with FSPB. Isoform 2 interacts (via its truncated PID domain) with active, GTP-bound RAB6A and RAB6B. Brain. Detected in the cerebellum, hippocampus, olfactory system, piriform and entorhinal cortex, supraoptic nucleus of the hypothalamus, substantia nigra, and other mesencephalic areas.

Its subcellular location is the cytoplasm. The protein localises to the perinuclear region. It localises to the nucleus. It is found in the golgi apparatus. Functionally, putative function in synaptic vesicle exocytosis by binding to Munc18-1, an essential component of the synaptic vesicle exocytotic machinery. May modulate processing of the amyloid-beta precursor protein (APP) and hence formation of APP-beta. This is Amyloid-beta A4 precursor protein-binding family A member 1 (Apba1) from Rattus norvegicus (Rat).